A 343-amino-acid polypeptide reads, in one-letter code: Transmembrane protein 120A (343 aa).

Over 1–132 the chain is Cytoplasmic; it reads MQSPPPDPLG…KQAKFAYKDE (132 aa). Lys-130 serves as a coordination point for CoA. The chain crosses the membrane as a helical span at residues 133 to 152; it reads YEKFKLYLTIILIVISFTCR. Residues 153–158 lie on the Extracellular side of the membrane; it reads FLLNSR. Residues 159 to 177 form a helical membrane-spanning segment; it reads VTDAAFNFLLVWYYCTLTI. At 178–190 the chain is on the cytoplasmic side; that stretch reads RESILINNGSRIK. Residues Ser-187 and Arg-188 each contribute to the CoA site. The helical transmembrane segment at 191-209 threads the bilayer; that stretch reads GWWVFHHYVSTFLSGVMLT. Residues 210 to 218 are Extracellular-facing; sequence WPDGLMYQK. A helical membrane pass occupies residues 219-240; the sequence is FRNQFLSFSMYQSFVQFLQYYY. 4 residues coordinate CoA: Gln-237, Tyr-240, Gln-241, and His-283. Topologically, residues 241 to 270 are cytoplasmic; that stretch reads QSGCLYRLRALGERHTMDLTVEGFQSWMWR. The chain crosses the membrane as a helical span at residues 271 to 294; it reads GLTFLLPFLFFGHFWQLFNALTLF. At 295-304 the chain is on the extracellular side; it reads NLARDPECKE. The chain crosses the membrane as a helical span at residues 305-330; sequence WQVLMCGLPFLLLFLGNFFTTLRVVH. Residues 331 to 343 lie on the Cytoplasmic side of the membrane; the sequence is QKFHSQQHGSKKD. CoA is bound at residue Lys-332.

This sequence belongs to the TMEM120 family. Homodimer. Forms heterooligomer with TMEM120B. Interacts with PKD2; TMEM120A inhibits PKD2 channel activity through the physical association of PKD2 with TMEM120A.

The protein resides in the cell membrane. It is found in the nucleus inner membrane. The protein localises to the endoplasmic reticulum. Its function is as follows. Multifunctional protein involved in mechanosensation, and plays an essential role in lipid metabolism and adipocyte differentiation. May function as a potential ion channel involved in sensing mechanical stimuli. Mediates the mechanosensitivity of the PKD2-TMEM120A channel complex through direct physical interaction. TMEM120A seems to affect mechanosensation by inhibiting PIEZO2 channels, possibly by altering cellular lipid content. TMEM120A is structurally similar to a lipid-modifying enzyme, ELOVL7, and contains a bound coenzyme A molecule, which suggests it might function as an enzyme in lipid metabolism. Additionnaly, implicated in innate immune response against Zika virus. Acts as a key activator of the antiviral signaling involving STING1. In Rattus norvegicus (Rat), this protein is Transmembrane protein 120A.